Consider the following 314-residue polypeptide: Olfactory receptor 2W3 (314 aa).

Over 1 to 25 (MDGTNGSTQTHFILLGFSDRPHLER) the chain is Extracellular. N-linked (GlcNAc...) asparagine glycosylation is present at Asn5. The helical transmembrane segment at 26 to 49 (ILFVVILIAYLLTLVGNTTIILVS) threads the bilayer. Topologically, residues 50–57 (RLDPHLHT) are cytoplasmic. Residues 58–79 (PMYFFLAHLSFLDLSFTTSSIP) traverse the membrane as a helical segment. At 80-100 (QLLYNLNGCDKTISYMGCAIQ) the chain is on the extracellular side. Residues 101-120 (LFLFLGLGGVECLLLAVMAY) traverse the membrane as a helical segment. Topologically, residues 121-139 (DRCVAICKPLHYMVIMNPR) are cytoplasmic. Residues 140–158 (LCRGLVSVTWGCGVANSLA) traverse the membrane as a helical segment. Topologically, residues 159 to 195 (MSPVTLRLPRCGHHEVDHFLREMPALIRMACVSTVAI) are extracellular. A helical transmembrane segment spans residues 196–219 (EGTVFVLAVGVVLSPLVFILLSYS). At 220-236 (YIVRAVLQIRSASGRQK) the chain is on the cytoplasmic side. Residues 237-259 (AFGTCGSHLTVVSLFYGNIIYMY) form a helical membrane-spanning segment. At 260 to 272 (MQPGASSSQDQGM) the chain is on the extracellular side. A helical transmembrane segment spans residues 273–292 (FLMLFYNIVTPLLNPLIYTL). At 293–314 (RNREVKGALGRLLLGKRELGKE) the chain is on the cytoplasmic side.

It belongs to the G-protein coupled receptor 1 family.

Its subcellular location is the cell membrane. Functionally, odorant receptor. The protein is Olfactory receptor 2W3 (OR2W3) of Homo sapiens (Human).